The sequence spans 499 residues: Terpentedienyl-diphosphate synthase (499 aa).

Mg(2+) contacts are provided by Asp-284 and Asp-286. The DXDD motif motif lies at 284 to 287 (DGDD).

This sequence belongs to the terpene synthase family. As to quaternary structure, monomer. Mg(2+) is required as a cofactor.

The catalysed reaction is (2E,6E,10E)-geranylgeranyl diphosphate = terpentedienyl diphosphate. It participates in antibiotic biosynthesis. In terms of biological role, involved in the production of the isoprenoid antibiotic terpentecin. Converts geranylgeranyl diphosphate (GGDP) into terpentedienol diphosphate (TDP) by a protonation-initiated cyclization. The protein is Terpentedienyl-diphosphate synthase (cyc1) of Kitasatospora griseola (Streptomyces griseolosporeus).